A 448-amino-acid chain; its full sequence is ATP-dependent protease ATPase subunit HslU (448 aa).

ATP is bound by residues I23, G65–E70, D263, E327, and R399.

Belongs to the ClpX chaperone family. HslU subfamily. As to quaternary structure, a double ring-shaped homohexamer of HslV is capped on each side by a ring-shaped HslU homohexamer. The assembly of the HslU/HslV complex is dependent on binding of ATP.

It localises to the cytoplasm. ATPase subunit of a proteasome-like degradation complex; this subunit has chaperone activity. The binding of ATP and its subsequent hydrolysis by HslU are essential for unfolding of protein substrates subsequently hydrolyzed by HslV. HslU recognizes the N-terminal part of its protein substrates and unfolds these before they are guided to HslV for hydrolysis. In Borreliella burgdorferi (strain ATCC 35210 / DSM 4680 / CIP 102532 / B31) (Borrelia burgdorferi), this protein is ATP-dependent protease ATPase subunit HslU.